A 795-amino-acid polypeptide reads, in one-letter code: Phenylalanine--tRNA ligase beta subunit (795 aa).

In terms of domain architecture, tRNA-binding spans 39–148 (AGTFNGVKVG…IDAPIGMDFR (110 aa)). Positions 401–476 (PKPNKVALRR…RIYGYDNIPN (76 aa)) constitute a B5 domain. Residues aspartate 454, aspartate 460, glutamate 463, and glutamate 464 each coordinate Mg(2+). Residues 701-794 (SKFPANRRDI…VSEKFGASLR (94 aa)) enclose the FDX-ACB domain.

Belongs to the phenylalanyl-tRNA synthetase beta subunit family. Type 1 subfamily. In terms of assembly, tetramer of two alpha and two beta subunits. The cofactor is Mg(2+).

It is found in the cytoplasm. The enzyme catalyses tRNA(Phe) + L-phenylalanine + ATP = L-phenylalanyl-tRNA(Phe) + AMP + diphosphate + H(+). In Vibrio vulnificus (strain YJ016), this protein is Phenylalanine--tRNA ligase beta subunit.